Reading from the N-terminus, the 210-residue chain is Peptidyl-tRNA hydrolase (210 aa).

Tyr-14 lines the tRNA pocket. His-19 serves as the catalytic Proton acceptor. The tRNA site is built by Phe-64, Asn-66, and Asn-112.

It belongs to the PTH family. In terms of assembly, monomer.

It is found in the cytoplasm. The enzyme catalyses an N-acyl-L-alpha-aminoacyl-tRNA + H2O = an N-acyl-L-amino acid + a tRNA + H(+). Functionally, hydrolyzes ribosome-free peptidyl-tRNAs (with 1 or more amino acids incorporated), which drop off the ribosome during protein synthesis, or as a result of ribosome stalling. In terms of biological role, catalyzes the release of premature peptidyl moieties from peptidyl-tRNA molecules trapped in stalled 50S ribosomal subunits, and thus maintains levels of free tRNAs and 50S ribosomes. This chain is Peptidyl-tRNA hydrolase, found in Methylorubrum populi (strain ATCC BAA-705 / NCIMB 13946 / BJ001) (Methylobacterium populi).